The following is a 461-amino-acid chain: Flavin-containing monooxygenase FMO GS-OX-like 8 (461 aa).

Residue Gly20–Gly25 participates in FAD binding. Gly220–Gly225 is an NADP(+) binding site.

Belongs to the FMO family. In terms of assembly, interacts with EER5. It depends on FAD as a cofactor.

Its function is as follows. Catalyzes the conversion of methylthioalkyl glucosinolates of any chain length into methylsulfinylalkyl glucosinolates. This is Flavin-containing monooxygenase FMO GS-OX-like 8 from Arabidopsis thaliana (Mouse-ear cress).